Consider the following 471-residue polypeptide: Light-independent protochlorophyllide reductase subunit N (471 aa).

Residues Cys22, Cys47, and Cys107 each contribute to the [4Fe-4S] cluster site.

This sequence belongs to the BchN/ChlN family. In terms of assembly, protochlorophyllide reductase is composed of three subunits; ChlL, ChlN and ChlB. Forms a heterotetramer of two ChlB and two ChlN subunits. Requires [4Fe-4S] cluster as cofactor.

Its subcellular location is the plastid. It localises to the chloroplast. The catalysed reaction is chlorophyllide a + oxidized 2[4Fe-4S]-[ferredoxin] + 2 ADP + 2 phosphate = protochlorophyllide a + reduced 2[4Fe-4S]-[ferredoxin] + 2 ATP + 2 H2O. The protein operates within porphyrin-containing compound metabolism; chlorophyll biosynthesis (light-independent). Functionally, component of the dark-operative protochlorophyllide reductase (DPOR) that uses Mg-ATP and reduced ferredoxin to reduce ring D of protochlorophyllide (Pchlide) to form chlorophyllide a (Chlide). This reaction is light-independent. The NB-protein (ChlN-ChlB) is the catalytic component of the complex. This chain is Light-independent protochlorophyllide reductase subunit N, found in Huperzia lucidula (Shining clubmoss).